The sequence spans 396 residues: Elongation factor Tu (396 aa).

The 196-residue stretch at 10 to 205 folds into the tr-type G domain; sequence KSHANIGTIG…AVDEYIPTPE (196 aa). The interval 19 to 26 is G1; the sequence is GHVDHGKT. 19-26 serves as a coordination point for GTP; that stretch reads GHVDHGKT. Threonine 26 serves as a coordination point for Mg(2+). A G2 region spans residues 61–65; that stretch reads GITIS. Residues 82–85 form a G3 region; the sequence is DCPG. Residues 82–86 and 137–140 each bind GTP; these read DCPGH and NKCD. Residues 137 to 140 are G4; it reads NKCD. Positions 175–177 are G5; the sequence is SAL. Threonine 385 is modified (phosphothreonine).

The protein belongs to the TRAFAC class translation factor GTPase superfamily. Classic translation factor GTPase family. EF-Tu/EF-1A subfamily. As to quaternary structure, monomer. Interacts with BrxC. Phosphorylated on Thr-385 in vitro by PrkC in the presence of poly-L-lysine or myelin basic protein, dephosphorylated by PrpC.

The protein resides in the cytoplasm. It carries out the reaction GTP + H2O = GDP + phosphate + H(+). In terms of biological role, GTP hydrolase that promotes the GTP-dependent binding of aminoacyl-tRNA to the A-site of ribosomes during protein biosynthesis. This Bacillus subtilis (strain 168) protein is Elongation factor Tu.